The sequence spans 395 residues: ADP-ribosylation factor-like protein 13A (395 aa).

Residues 28-35 (GLDNSGKS), 71-75 (DLTGD), and 130-133 (NKQD) contribute to the GTP site.

The protein belongs to the small GTPase superfamily. Arf family.

This Rattus norvegicus (Rat) protein is ADP-ribosylation factor-like protein 13A (Arl13a).